The following is a 318-amino-acid chain: NADH-ubiquinone oxidoreductase chain 1 (318 aa).

8 helical membrane-spanning segments follow: residues Pro2–Leu22, Ala69–Leu89, Leu100–Gly120, Ala147–Thr167, His171–Ala191, Leu222–Phe242, Glu253–Ile273, and Leu294–Ile314.

The protein belongs to the complex I subunit 1 family. In terms of assembly, core subunit of respiratory chain NADH dehydrogenase (Complex I) which is composed of 45 different subunits.

The protein resides in the mitochondrion inner membrane. It catalyses the reaction a ubiquinone + NADH + 5 H(+)(in) = a ubiquinol + NAD(+) + 4 H(+)(out). Core subunit of the mitochondrial membrane respiratory chain NADH dehydrogenase (Complex I) which catalyzes electron transfer from NADH through the respiratory chain, using ubiquinone as an electron acceptor. Essential for the catalytic activity and assembly of complex I. This chain is NADH-ubiquinone oxidoreductase chain 1 (MT-ND1), found in Hylobates lar (Lar gibbon).